The chain runs to 69 residues: Large ribosomal subunit protein uL29 (69 aa).

Belongs to the universal ribosomal protein uL29 family.

The chain is Large ribosomal subunit protein uL29 (rpmC) from Lactococcus lactis subsp. lactis (strain IL1403) (Streptococcus lactis).